Here is a 245-residue protein sequence, read N- to C-terminus: 1-(5-phosphoribosyl)-5-[(5-phosphoribosylamino)methylideneamino] imidazole-4-carboxamide isomerase (245 aa).

The active-site Proton acceptor is the aspartate 7. Aspartate 129 acts as the Proton donor in catalysis.

This sequence belongs to the HisA/HisF family.

Its subcellular location is the cytoplasm. The catalysed reaction is 1-(5-phospho-beta-D-ribosyl)-5-[(5-phospho-beta-D-ribosylamino)methylideneamino]imidazole-4-carboxamide = 5-[(5-phospho-1-deoxy-D-ribulos-1-ylimino)methylamino]-1-(5-phospho-beta-D-ribosyl)imidazole-4-carboxamide. The protein operates within amino-acid biosynthesis; L-histidine biosynthesis; L-histidine from 5-phospho-alpha-D-ribose 1-diphosphate: step 4/9. This chain is 1-(5-phosphoribosyl)-5-[(5-phosphoribosylamino)methylideneamino] imidazole-4-carboxamide isomerase, found in Shigella boydii serotype 4 (strain Sb227).